Here is a 341-residue protein sequence, read N- to C-terminus: Processive diacylglycerol beta-glycosyltransferase (341 aa).

This sequence belongs to the glycosyltransferase 2 family. Mg(2+) serves as cofactor.

It localises to the cell membrane. The catalysed reaction is a 1,2-diacyl-sn-glycerol + UDP-alpha-D-glucose = a 1,2-diacyl-3-O-(beta-D-glucopyranosyl)-sn-glycerol + UDP + H(+). The enzyme catalyses a 1,2-diacyl-sn-glycerol + UDP-alpha-D-galactose = a 1,2-diacyl-3-O-(beta-D-galactosyl)-sn-glycerol + UDP + H(+). It carries out the reaction a 1,2-diacyl-3-O-(beta-D-glucopyranosyl)-sn-glycerol + UDP-alpha-D-glucose = a 1,2-diacyl-3-O-(beta-D-Glc-(1-&gt;6)-beta-D-Glc)-sn-glycerol + UDP + H(+). It catalyses the reaction a 1,2-diacyl-3-O-(beta-D-galactosyl)-sn-glycerol + UDP-alpha-D-galactose = a 1,2-diacyl-3-O-[beta-D-galactosyl-(1-&gt;6)-beta-D-galactosyl]-sn-glycerol + UDP + H(+). Its pathway is glycolipid metabolism; diglucosyl-diacylglycerol biosynthesis. With respect to regulation, activated by the negatively charged lipid dioleoylphosphatidylglycerol (DOPG) and inhibited by N-(n-nonyl)deoxygalactonojirimycin (C9J). Its function is as follows. Processive glycosyltransferase involved in the biosynthesis of both the non-bilayer-prone beta-monoglycosyldiacylglycerol and the bilayer-forming membrane lipid beta-diglycosyldiacylglycerol. These components contribute to regulate the properties and stability of the membrane. Catalyzes sequentially the transfers of glucosyl or galactosyl residues from UDP-Glc or UDP-Gal to diacylglycerol (DAG) acceptor to form the corresponding beta-glycosyl-DAG (3-O-(beta-D-glycopyranosyl)-1,2-diacyl-sn-glycerol), which then acts as acceptor to give beta-diglycosyl-DAG product (3-O-(beta-D-glycopyranosyl-beta-(1-&gt;6)-D-glycopyranosyl)-1,2-diacyl-sn-glycerol). Dioleoylglycerol (DOG) is a preferred sugar acceptor than 3-O-(beta-D-glucopyranosyl)-1,2-dioleoyl-sn-glycerol. The chain is Processive diacylglycerol beta-glycosyltransferase from Mycoplasma genitalium (strain ATCC 33530 / DSM 19775 / NCTC 10195 / G37) (Mycoplasmoides genitalium).